A 578-amino-acid polypeptide reads, in one-letter code: Proline--tRNA ligase (578 aa).

The protein belongs to the class-II aminoacyl-tRNA synthetase family. ProS type 1 subfamily. As to quaternary structure, homodimer.

It localises to the cytoplasm. The enzyme catalyses tRNA(Pro) + L-proline + ATP = L-prolyl-tRNA(Pro) + AMP + diphosphate. Functionally, catalyzes the attachment of proline to tRNA(Pro) in a two-step reaction: proline is first activated by ATP to form Pro-AMP and then transferred to the acceptor end of tRNA(Pro). As ProRS can inadvertently accommodate and process non-cognate amino acids such as alanine and cysteine, to avoid such errors it has two additional distinct editing activities against alanine. One activity is designated as 'pretransfer' editing and involves the tRNA(Pro)-independent hydrolysis of activated Ala-AMP. The other activity is designated 'posttransfer' editing and involves deacylation of mischarged Ala-tRNA(Pro). The misacylated Cys-tRNA(Pro) is not edited by ProRS. The chain is Proline--tRNA ligase from Burkholderia lata (strain ATCC 17760 / DSM 23089 / LMG 22485 / NCIMB 9086 / R18194 / 383).